Consider the following 858-residue polypeptide: Beta-galactosidase 6 (858 aa).

Positions 1 to 30 (MAAATVGVLLRLLLLPVVVVVSLLVGASRA) are cleaved as a signal peptide. N-linked (GlcNAc...) asparagine glycosylation is present at Asn32. Glu189 (proton donor) is an active-site residue. The active-site Nucleophile is Glu258. Residues Asn259, Asn482, Asn507, Asn595, and Asn830 are each glycosylated (N-linked (GlcNAc...) asparagine). One can recognise an SUEL-type lectin domain in the interval 772 to 858 (QTQGPALRLE…KSLVVEAACS (87 aa)).

It belongs to the glycosyl hydrolase 35 family.

It is found in the secreted. It localises to the extracellular space. Its subcellular location is the apoplast. The enzyme catalyses Hydrolysis of terminal non-reducing beta-D-galactose residues in beta-D-galactosides.. In terms of biological role, releases galactose by hydrolysis of plant cell wall galactose-containing polysaccharides such as galacto-xyloglucan, pectic galactan and galactan (in vitro). This chain is Beta-galactosidase 6, found in Oryza sativa subsp. japonica (Rice).